The sequence spans 250 residues: Undecaprenyl-diphosphatase (250 aa).

7 consecutive transmembrane segments (helical) span residues 35–55, 73–93, 100–120, 146–166, 171–191, 200–220, and 229–249; these read DLSVFALLHLATLAAIVIFVG, INLTLKIIVSTIPAAIFGVLL, SLSNLKIISFFFLVTSAALLI, ALAIFPGISRSGFTLFGSLLI, EIALKYSFLVSIPVILGAGLL, SYSISSAIVAFFFGLLSLFIL, and LKIFSAYCIFISIFSFVLGGI.

It belongs to the UppP family.

The protein resides in the cell inner membrane. It catalyses the reaction di-trans,octa-cis-undecaprenyl diphosphate + H2O = di-trans,octa-cis-undecaprenyl phosphate + phosphate + H(+). Its function is as follows. Catalyzes the dephosphorylation of undecaprenyl diphosphate (UPP). Confers resistance to bacitracin. This chain is Undecaprenyl-diphosphatase, found in Thermosipho melanesiensis (strain DSM 12029 / CIP 104789 / BI429).